The primary structure comprises 204 residues: Refilin-A (204 aa).

The tract at residues 1 to 52 is disordered; sequence MVGHLHLQAMGDTREQSRDGLLDSPDSGLPPSPSPSPPFYALSPGTLDTRTT. A compositionally biased stretch (basic and acidic residues) spans 12 to 21; the sequence is DTREQSRDGL. Pro residues predominate over residues 28-38; it reads GLPPSPSPSPP. R151 bears the Asymmetric dimethylarginine mark.

Belongs to the Refilin family. Interacts with FLNA and FLNB. As to expression, detected in various tissues, with highest expression in lung, followed by spleen.

It is found in the cytoplasm. The protein localises to the cytoskeleton. Functionally, involved in the regulation of the perinuclear actin network and nuclear shape through interaction with filamins. Plays an essential role in the formation of cartilaginous skeletal elements. In Mus musculus (Mouse), this protein is Refilin-A (Rflna).